The chain runs to 496 residues: GTPase Der (496 aa).

EngA-type G domains are found at residues 3–166 (PVVA…FDNL) and 208–381 (IKLA…RSAT). Residues 9–16 (GRPNVGKS), 56–60 (DTGGI), 118–121 (NKVD), 214–221 (GRPNVGKS), 261–265 (DTAGV), and 326–329 (NKWD) contribute to the GTP site. In terms of domain architecture, KH-like spans 382–466 (TRVGTSVLTR…PIRIQFQNSD (85 aa)).

It belongs to the TRAFAC class TrmE-Era-EngA-EngB-Septin-like GTPase superfamily. EngA (Der) GTPase family. As to quaternary structure, associates with the 50S ribosomal subunit.

GTPase that plays an essential role in the late steps of ribosome biogenesis. The polypeptide is GTPase Der (Vibrio vulnificus (strain CMCP6)).